The primary structure comprises 721 residues: Peroxisomal fatty acid beta-oxidation multifunctional protein AIM1 (721 aa).

The active-site Nucleophile is the glutamate 116. The Proton acceptor role is filled by glutamate 136. The Microbody targeting signal motif lies at 719–721 (SKL).

In the N-terminal section; belongs to the enoyl-CoA hydratase/isomerase family. The protein in the central section; belongs to the 3-hydroxyacyl-CoA dehydrogenase family. In terms of tissue distribution, widely expressed.

Its subcellular location is the peroxisome. The enzyme catalyses a (3S)-3-hydroxyacyl-CoA = a (2E)-enoyl-CoA + H2O. It carries out the reaction a 4-saturated-(3S)-3-hydroxyacyl-CoA = a (3E)-enoyl-CoA + H2O. The catalysed reaction is (3S)-3-hydroxybutanoyl-CoA = (2E)-butenoyl-CoA + H2O. It catalyses the reaction (3S)-hydroxyoctanoyl-CoA = (2E)-octenoyl-CoA + H2O. The enzyme catalyses (3S)-3-hydroxydodecanoyl-CoA = (2E)-dodecenoyl-CoA + H2O. It carries out the reaction (3S)-hydroxytetradecanoyl-CoA = (2E)-tetradecenoyl-CoA + H2O. The catalysed reaction is (3S)-hydroxyhexanoyl-CoA = (2E)-hexenoyl-CoA + H2O. It catalyses the reaction a (3Z)-enoyl-CoA = a 4-saturated (2E)-enoyl-CoA. The enzyme catalyses a (3E)-enoyl-CoA = a 4-saturated (2E)-enoyl-CoA. It carries out the reaction (3S)-3-hydroxybutanoyl-CoA = (3R)-3-hydroxybutanoyl-CoA. The catalysed reaction is a (3S)-3-hydroxyacyl-CoA + NAD(+) = a 3-oxoacyl-CoA + NADH + H(+). It catalyses the reaction (3S)-3-hydroxybutanoyl-CoA + NAD(+) = acetoacetyl-CoA + NADH + H(+). The enzyme catalyses (3S)-hydroxyhexanoyl-CoA + NAD(+) = 3-oxohexanoyl-CoA + NADH + H(+). It carries out the reaction (3S)-hydroxyoctanoyl-CoA + NAD(+) = 3-oxooctanoyl-CoA + NADH + H(+). The catalysed reaction is (3S)-3-hydroxydodecanoyl-CoA + NAD(+) = 3-oxododecanoyl-CoA + NADH + H(+). It catalyses the reaction (3S)-hydroxytetradecanoyl-CoA + NAD(+) = 3-oxotetradecanoyl-CoA + NADH + H(+). The protein operates within lipid metabolism; fatty acid beta-oxidation. Involved in peroxisomal fatty acid beta-oxidation. Required for wound-induced jasmonate biosynthesis. Possesses enoyl-CoA hydratase activity against short chain substrates (C4-C6) and 3-hydroxyacyl-CoA dehydrogenase activity against chains of variable sizes (C6-C16). Possesses cinnamoyl-CoA hydratase activity and is involved in the peroxisomal beta-oxidation pathway for the biosynthesis of benzoic acid (BA). Required for the accumulation in seeds of benzoylated glucosinolates (BGs) and substituted hydroxybenzoylated choline esters, which are BA-containing secondary metabolites. Required for salicylic acid (SA) in seeds. This is Peroxisomal fatty acid beta-oxidation multifunctional protein AIM1 (AIM1) from Arabidopsis thaliana (Mouse-ear cress).